Consider the following 1124-residue polypeptide: Probable leucine-rich repeat receptor-like protein kinase At2g33170 (1124 aa).

A signal peptide spans 1–32 (MGWWIFEFKKESKSMFVGVLFLLTLLVWTSES). Topologically, residues 33–752 (LNSDGQFLLE…LKAGSARRGR (720 aa)) are extracellular. N-linked (GlcNAc...) asparagine glycans are attached at residues Asn-72, Asn-96, and Asn-131. LRR repeat units follow at residues 86–109 (VVTS…GGLV), 110–132 (NLVY…IGNC), 134–156 (KLEV…INKL), 158–180 (QLRS…IGDL), 182–205 (NLEE…GNLN), 206–228 (KLTT…IGKC), 230–252 (NLKL…IGML), 254–277 (KLQE…GNLT), 278–300 (SLET…IGNM), 302–325 (SLKK…GKLS), 326–348 (KVME…LSKI), 350–371 (ELRL…ELSK), 374–397 (NLAK…QNLT), 398–420 (SMRQ…LGLY), 422–444 (PLWV…ICQQ), 446–468 (NLIL…VLRC), 470–491 (SLLQ…ELCK), 494–516 (NLSA…IGTC), 518–540 (KLQR…ISKL), 542–564 (NLVT…IANC), 566–588 (MLQR…LGSL), 590–613 (QLEI…GNLT), 614–636 (HLTE…LGLL), 638–661 (SLQI…IGNL), 663–686 (LLMY…ENLS), and 687–709 (SLLG…QIFQ). The N-linked (GlcNAc...) asparagine glycan is linked to Asn-192. The N-linked (GlcNAc...) asparagine glycan is linked to Asn-275. Asn-314 is a glycosylation site (N-linked (GlcNAc...) asparagine). An N-linked (GlcNAc...) asparagine glycan is attached at Asn-395. Asn-494 is a glycosylation site (N-linked (GlcNAc...) asparagine). Residue Asn-547 is glycosylated (N-linked (GlcNAc...) asparagine). Asn-611 carries an N-linked (GlcNAc...) asparagine glycan. Residues Asn-644, Asn-684, Asn-692, Asn-697, and Asn-710 are each glycosylated (N-linked (GlcNAc...) asparagine). Residues 753-773 (IIIIVSSVIGGISLLLIAIVV) form a helical membrane-spanning segment. The Cytoplasmic segment spans residues 774 to 1124 (HFLRNPVEPT…CSDLPPPAPP (351 aa)). Residues Thr-808 and Thr-816 each carry the phosphothreonine modification. Residues 819 to 1100 (FHDSYIVGRG…TMREVVLMLI (282 aa)) form the Protein kinase domain. Residues 825–833 (VGRGACGTV) and Lys-847 each bind ATP. Residues Tyr-901 and Tyr-939 each carry the phosphotyrosine modification. The Proton acceptor role is filled by Asp-952. Ser-986 is modified (phosphoserine). Residues Tyr-994 and Tyr-1001 each carry the phosphotyrosine modification. Phosphothreonine is present on Thr-1002.

Belongs to the protein kinase superfamily. Ser/Thr protein kinase family.

The protein resides in the membrane. The enzyme catalyses L-seryl-[protein] + ATP = O-phospho-L-seryl-[protein] + ADP + H(+). It carries out the reaction L-threonyl-[protein] + ATP = O-phospho-L-threonyl-[protein] + ADP + H(+). The protein is Probable leucine-rich repeat receptor-like protein kinase At2g33170 of Arabidopsis thaliana (Mouse-ear cress).